The sequence spans 707 residues: Molybdenum cofactor sulfurase (707 aa).

N6-(pyridoxal phosphate)lysine is present on K206. C365 is an active-site residue. The MOSC domain maps to 558–705 (QWLENALDMT…VEAGSAVRFF (148 aa)).

The protein belongs to the class-V pyridoxal-phosphate-dependent aminotransferase family. MOCOS subfamily. It depends on pyridoxal 5'-phosphate as a cofactor.

The enzyme catalyses Mo-molybdopterin + L-cysteine + AH2 = thio-Mo-molybdopterin + L-alanine + A + H2O. Its pathway is cofactor biosynthesis; molybdopterin biosynthesis. Functionally, sulfurates the molybdenum cofactor. Sulfation of molybdenum is essential for xanthine dehydrogenase (XDH) and aldehyde oxidase (ADO) enzymes in which molybdenum cofactor is liganded by 1 oxygen and 1 sulfur atom in active form. The polypeptide is Molybdenum cofactor sulfurase (mocs-1) (Caenorhabditis briggsae).